Reading from the N-terminus, the 757-residue chain is Cap-specific mRNA (nucleoside-2'-O-)-methyltransferase 1 (757 aa).

The segment at 1–61 (MFQSNQYDEY…EDDEEEEDTP (61 aa)) is disordered. Composition is skewed to acidic residues over residues 18–32 (EENE…NENE) and 40–59 (GDQD…EEED). The region spanning 62–108 (KLSFGAKFLAKHGHIEGQGLGKEKDGRIDLIEVDRFQSTKGLGFAEN) is the G-patch domain. The RrmJ-type SAM-dependent 2'-O-MTase domain maps to 214 to 438 (IFINRAAVKM…ERYIICKNFL (225 aa)). Positions 257, 301, and 352 each coordinate S-adenosyl-L-methionine. The active-site Proton acceptor is the K392. Residues 538–548 (HKNRQKHHHNN) are compositionally biased toward basic residues. Positions 538–670 (HKNRQKHHHN…NNNNNNNNKN (133 aa)) are disordered. The span at 549–569 (HSNNNNNNNNSNNNNNNNNQH) shows a compositional bias: low complexity. Residues 570-581 (QHQHHQHQHHQN) are compositionally biased toward basic residues. Residues 597–668 (NNNINNNSNN…NNNNNNNNNN (72 aa)) show a composition bias toward low complexity.

It catalyses the reaction a 5'-end (N(7)-methyl 5'-triphosphoguanosine)-ribonucleoside in mRNA + S-adenosyl-L-methionine = a 5'-end (N(7)-methyl 5'-triphosphoguanosine)-(2'-O-methyl-ribonucleoside) in mRNA + S-adenosyl-L-homocysteine + H(+). Functionally, S-adenosyl-L-methionine-dependent methyltransferase that mediates mRNA cap1 2'-O-ribose methylation to the 5'-cap structure of mRNAs. Methylates the ribose of the first nucleotide of a m(7)GpppG-capped mRNA to produce m(7)GpppNmp (cap1). Cap1 modification is linked to higher levels of translation. In Dictyostelium discoideum (Social amoeba), this protein is Cap-specific mRNA (nucleoside-2'-O-)-methyltransferase 1.